We begin with the raw amino-acid sequence, 405 residues long: Probable tRNA sulfurtransferase (405 aa).

The THUMP domain maps to 60 to 165 (DQVMARLSQV…REAIYLSTKT (106 aa)). Residues 183–184 (ML), 208–209 (HF), Arg-265, Gly-287, and Gln-296 contribute to the ATP site.

It belongs to the ThiI family.

The protein localises to the cytoplasm. It carries out the reaction [ThiI sulfur-carrier protein]-S-sulfanyl-L-cysteine + a uridine in tRNA + 2 reduced [2Fe-2S]-[ferredoxin] + ATP + H(+) = [ThiI sulfur-carrier protein]-L-cysteine + a 4-thiouridine in tRNA + 2 oxidized [2Fe-2S]-[ferredoxin] + AMP + diphosphate. It catalyses the reaction [ThiS sulfur-carrier protein]-C-terminal Gly-Gly-AMP + S-sulfanyl-L-cysteinyl-[cysteine desulfurase] + AH2 = [ThiS sulfur-carrier protein]-C-terminal-Gly-aminoethanethioate + L-cysteinyl-[cysteine desulfurase] + A + AMP + 2 H(+). It functions in the pathway cofactor biosynthesis; thiamine diphosphate biosynthesis. Functionally, catalyzes the ATP-dependent transfer of a sulfur to tRNA to produce 4-thiouridine in position 8 of tRNAs, which functions as a near-UV photosensor. Also catalyzes the transfer of sulfur to the sulfur carrier protein ThiS, forming ThiS-thiocarboxylate. This is a step in the synthesis of thiazole, in the thiamine biosynthesis pathway. The sulfur is donated as persulfide by IscS. This chain is Probable tRNA sulfurtransferase, found in Lacticaseibacillus casei (strain BL23) (Lactobacillus casei).